A 339-amino-acid chain; its full sequence is Lipopolysaccharide glucosyltransferase WaaO (339 aa).

UDP-binding positions include 34 to 39 and 131 to 132; these read GTDKNF and DA. Positions 131 and 133 each coordinate Mg(2+). 2 short sequence motifs (DXD) span residues 131-133 and 220-222; these read DAD and DQD. H265 contacts Mg(2+). Residue 265-271 coordinates UDP; it reads HYIGPTK.

It belongs to the glycosyltransferase 8 family. Mg(2+) is required as a cofactor.

The enzyme catalyses UDP-glucose + lipopolysaccharide = UDP + alpha-D-glucosyl-lipopolysaccharide.. The catalysed reaction is alpha-D-Gal-(1-&gt;6)-alpha-D-Glc-(1-&gt;3)-[L-alpha-D-Hep-(1-&gt;7)]-4-O-PO3(2-)-L-alpha-D-Hep-(1-&gt;3)-4-O-PO3(2-)-L-alpha-D-Hep-(1-&gt;5)-[alpha-Kdo-(2-&gt;4)]-alpha-Kdo-(2-&gt;6)-lipid A + UDP-alpha-D-glucose = alpha-D-Glc-(1-&gt;3)-[alpha-D-Gal-(1-&gt;6)]-alpha-D-Glc-(1-&gt;3)-[L-alpha-D-Hep-(1-&gt;7)]-4-O-PO3(2-)-L-alpha-D-Hep-(1-&gt;3)-4-O-PO3(2-)-L-alpha-D-Hep-(1-&gt;5)-[alpha-Kdo-(2-&gt;4)]-alpha-Kdo-(2-&gt;6)-lipid A + UDP + H(+). It participates in bacterial outer membrane biogenesis; LPS core biosynthesis. Glucosyltransferase involved in the biosynthesis of the core oligosaccharide region of lipopolysaccharide (LPS). Catalyzes the addition of a second glucose (glucose II) to the first outer-core glucose (glucose I). In vitro, can add multiple glucose residues to its lipid acceptor. Activity does not require the branched galactose added by WaaB, but it is higher in the presence of this branched galactose. In the absence of a lipid acceptor, can hydrolyze UDP-glucose, but not UDP-galactose. This chain is Lipopolysaccharide glucosyltransferase WaaO, found in Escherichia coli (strain K12).